Reading from the N-terminus, the 91-residue chain is Cytoplasmic envelopment protein 3 (91 aa).

The N-myristoyl glycine; by host moiety is linked to residue Gly-2. Residues Asn-48–Arg-81 are disordered. Residues Asp-52–Asp-62 are compositionally biased toward acidic residues.

Belongs to the herpesviridae cytoplasmic envelopment protein 3 family. In terms of assembly, interacts with cytoplasmic envelopment protein 2; this interaction is essential for the proper localization of each protein to the assembly complex and thus for the production of infectious virus. Myristoylation and palmitoylation (probably on one or more of the nearby cysteines at the N-terminus) enable membrane-binding and Golgi apparatus-specific targeting and are essential for efficient packaging. In terms of processing, phosphorylated. Phosphorylation does not seem to be required for recycling to the host Golgi apparatus. Packaging is selective for underphosphorylated forms.

It is found in the virion tegument. The protein localises to the virion membrane. Its subcellular location is the host cell membrane. It localises to the host Golgi apparatus membrane. Functionally, plays an important role in the cytoplasmic envelopment of tegument proteins and capsids during the assembly and egress processes. Also participates in viral entry at the fusion step probably by regulating the core fusion machinery. The sequence is that of Cytoplasmic envelopment protein 3 (38) from Equus caballus (Horse).